The chain runs to 362 residues: Ribosome-binding ATPase YchF (362 aa).

One can recognise an OBG-type G domain in the interval 3 to 255 (FKCGIIGLPN…MNEDEQKYFM (253 aa)). Position 12 to 17 (12 to 17 (NVGKST)) interacts with ATP. 2 residues coordinate Mg(2+): serine 16 and threonine 36. The TGS domain maps to 277–360 (NLITFFTAGI…QDGDIINFLF (84 aa)).

It belongs to the TRAFAC class OBG-HflX-like GTPase superfamily. OBG GTPase family. YchF/OLA1 subfamily. Mg(2+) is required as a cofactor.

ATPase that binds to both the 70S ribosome and the 50S ribosomal subunit in a nucleotide-independent manner. The polypeptide is Ribosome-binding ATPase YchF (Buchnera aphidicola subsp. Schizaphis graminum (strain Sg)).